A 452-amino-acid polypeptide reads, in one-letter code: UDP-N-acetylmuramoylalanine--D-glutamate ligase (452 aa).

Position 119 to 125 (119 to 125 (GSNGKTT)) interacts with ATP.

Belongs to the MurCDEF family.

It localises to the cytoplasm. It catalyses the reaction UDP-N-acetyl-alpha-D-muramoyl-L-alanine + D-glutamate + ATP = UDP-N-acetyl-alpha-D-muramoyl-L-alanyl-D-glutamate + ADP + phosphate + H(+). The protein operates within cell wall biogenesis; peptidoglycan biosynthesis. In terms of biological role, cell wall formation. Catalyzes the addition of glutamate to the nucleotide precursor UDP-N-acetylmuramoyl-L-alanine (UMA). The chain is UDP-N-acetylmuramoylalanine--D-glutamate ligase (murD) from Streptococcus pyogenes serotype M1.